A 65-amino-acid chain; its full sequence is Toxin Co52 (65 aa).

The LCN-type CS-alpha/beta domain maps to 2–65 (EDGYLVDKTG…PTWPLPNKTC (64 aa)). 4 disulfides stabilise this stretch: cysteine 12-cysteine 65, cysteine 16-cysteine 41, cysteine 25-cysteine 46, and cysteine 29-cysteine 48.

In terms of tissue distribution, expressed by the venom gland.

The protein localises to the secreted. Its function is as follows. Beta toxins bind voltage-independently at site-4 of sodium channels (Nav) and shift the voltage of activation toward more negative potentials thereby affecting sodium channel activation and promoting spontaneous and repetitive firing. Not toxic to mice, chicks, crickets or woodlice (at 5 ug). The sequence is that of Toxin Co52 from Centruroides ornatus (Scorpion).